A 681-amino-acid polypeptide reads, in one-letter code: Threonine--tRNA ligase (681 aa).

Positions 3–97 (KQIQVTLPDG…EEDVQLALLT (95 aa)) constitute a TGS domain. The segment at 279–576 (DHRVLGKQLD…LIEHYAGAFP (298 aa)) is catalytic. Zn(2+) contacts are provided by Cys372, His423, and His553.

It belongs to the class-II aminoacyl-tRNA synthetase family. In terms of assembly, homodimer. Zn(2+) is required as a cofactor.

The protein resides in the cytoplasm. It catalyses the reaction tRNA(Thr) + L-threonine + ATP = L-threonyl-tRNA(Thr) + AMP + diphosphate + H(+). Catalyzes the attachment of threonine to tRNA(Thr) in a two-step reaction: L-threonine is first activated by ATP to form Thr-AMP and then transferred to the acceptor end of tRNA(Thr). Also edits incorrectly charged L-seryl-tRNA(Thr). In Acidobacterium capsulatum (strain ATCC 51196 / DSM 11244 / BCRC 80197 / JCM 7670 / NBRC 15755 / NCIMB 13165 / 161), this protein is Threonine--tRNA ligase.